We begin with the raw amino-acid sequence, 706 residues long: Probable serine/threonine-protein kinase zyg-1 (706 aa).

The Protein kinase domain maps to tyrosine 13–methionine 249. ATP-binding positions include isoleucine 19–valine 27 and lysine 41. Catalysis depends on aspartate 131, which acts as the Proton acceptor. Composition is skewed to basic and acidic residues over residues serine 261–alanine 290 and phenylalanine 323–glycine 336. Disordered regions lie at residues serine 261 to glutamine 351 and serine 566 to serine 632. A compositionally biased stretch (low complexity) spans serine 566–serine 579. Polar residues-rich tracts occupy residues arginine 580–serine 592 and lysine 603–valine 629.

This sequence belongs to the protein kinase superfamily. Ser/Thr protein kinase family. Interacts with sel-10. Post-translationally, probably ubiquitinated by the SCF(sel-10) and SCF(lin-23) E3 ubiquitin ligase complexes, leading to its proteasomal degradation.

It localises to the cytoplasm. The protein resides in the cytoskeleton. It is found in the microtubule organizing center. The protein localises to the centrosome. Its subcellular location is the centriole. The enzyme catalyses L-seryl-[protein] + ATP = O-phospho-L-seryl-[protein] + ADP + H(+). It catalyses the reaction L-threonyl-[protein] + ATP = O-phospho-L-threonyl-[protein] + ADP + H(+). In terms of biological role, protein kinase that plays a central role in centrosome duplication, control of centrosome size, spindle formation and nuclear envelope breakdown during cell divisions. Paternal copy is required to regulate synthesis of daughter centrioles prior to fertilization. Maternal copy regulates centrosome duplication during later cell cycles. Functions upstream of sas-5 and sas-6, and is required for their localization to the centrosome. Its role in nuclear envelope breakdown is mediated by the spindly-like protein spdl-1 and the RZZ complex, which in turn recruits the spindle checkpoint proteins mdf-1 and mdf-2, dynein and dynactin to unattached kinetochores. In Caenorhabditis elegans, this protein is Probable serine/threonine-protein kinase zyg-1.